The primary structure comprises 121 residues: Large ribosomal subunit protein uL22 (121 aa).

This sequence belongs to the universal ribosomal protein uL22 family. In terms of assembly, part of the 50S ribosomal subunit.

This protein binds specifically to 23S rRNA; its binding is stimulated by other ribosomal proteins, e.g. L4, L17, and L20. It is important during the early stages of 50S assembly. It makes multiple contacts with different domains of the 23S rRNA in the assembled 50S subunit and ribosome. Its function is as follows. The globular domain of the protein is located near the polypeptide exit tunnel on the outside of the subunit, while an extended beta-hairpin is found that lines the wall of the exit tunnel in the center of the 70S ribosome. The protein is Large ribosomal subunit protein uL22 of Salinibacter ruber (strain DSM 13855 / M31).